The chain runs to 84 residues: UPF0153 protein PA1578.1 (84 aa).

Belongs to the UPF0153 family.

In Pseudomonas aeruginosa (strain ATCC 15692 / DSM 22644 / CIP 104116 / JCM 14847 / LMG 12228 / 1C / PRS 101 / PAO1), this protein is UPF0153 protein PA1578.1.